A 544-amino-acid chain; its full sequence is Glucans biosynthesis protein G 1 (544 aa).

Positions Met-1–Ala-33 are cleaved as a signal peptide. Residues Ser-36 to Ala-58 are disordered.

The protein belongs to the OpgD/OpgG family.

It localises to the periplasm. It participates in glycan metabolism; osmoregulated periplasmic glucan (OPG) biosynthesis. Functionally, involved in the biosynthesis of osmoregulated periplasmic glucans (OPGs). This Shewanella oneidensis (strain ATCC 700550 / JCM 31522 / CIP 106686 / LMG 19005 / NCIMB 14063 / MR-1) protein is Glucans biosynthesis protein G 1 (opgG1).